Consider the following 171-residue polypeptide: Ribosome maturation factor RimP (171 aa).

Belongs to the RimP family.

The protein resides in the cytoplasm. Its function is as follows. Required for maturation of 30S ribosomal subunits. This is Ribosome maturation factor RimP from Oleidesulfovibrio alaskensis (strain ATCC BAA-1058 / DSM 17464 / G20) (Desulfovibrio alaskensis).